Consider the following 138-residue polypeptide: MTKTIPRIGSRRNGRIGLRKTGRRIPKGIIHVQASFNNTIVTVTDVRGRVVSWSSAGTCGFKGTRRGTPFAAQTAAGNAIRTVVDQGMQRAEVMIKGPGLGRDAALRAIRRSGILLNFVRDVTPMPHNGCRPPKKRRV.

This sequence belongs to the universal ribosomal protein uS11 family. Part of the 30S ribosomal subunit.

It is found in the plastid. The protein localises to the chloroplast. In Acorus calamus (Sweet flag), this protein is Small ribosomal subunit protein uS11c.